A 216-amino-acid chain; its full sequence is Protein Syd (216 aa).

Belongs to the Syd family.

Its subcellular location is the cell inner membrane. In terms of biological role, interacts with the SecY protein in vivo. May bind preferentially to an uncomplexed state of SecY, thus functioning either as a chelating agent for excess SecY in the cell or as a regulatory factor that negatively controls the translocase function. This chain is Protein Syd, found in Shewanella baltica (strain OS155 / ATCC BAA-1091).